Consider the following 522-residue polypeptide: Target of rapamycin complex 2 subunit MAPKAP1 (522 aa).

Positions 2 to 184 are interaction with MAP3K2; sequence GFLDNPTIIL…KKIDVYLPLH (183 aa). The interval 2–267 is interaction with NBN; that stretch reads GFLDNPTIIL…GFSTLALVEK (266 aa). Thr-86 is modified (phosphothreonine). A phosphoserine mark is found at Ser-128, Ser-186, Ser-315, and Ser-356. The CRIM domain occupies 139-267; sequence QSILSVRLEQ…GFSTLALVEK (129 aa). Residues 279-353 are SIN1-type RBD; the sequence is LFVRINAAHG…QSAWEFCLVR (75 aa). Residues 382–487 enclose the SIN1-type PH domain; that stretch reads HYKSFKVSMI…IVLKVNYILE (106 aa). Arg-393 provides a ligand contact to a 1,2-diacyl-sn-glycero-3-phospho-(1D-myo-inositol-3,4,5-trisphosphate). A Phosphothreonine modification is found at Thr-398. A 1,2-diacyl-sn-glycero-3-phospho-(1D-myo-inositol-3,4,5-trisphosphate) is bound by residues Lys-428 and Lys-464. The segment at 468–522 is interaction with ATF2; it reads FESDAATVNEIVLKVNYILESRASTARADYFAQKQRKLNRRTSFSFQKEKKSGQQ. Ser-510 carries the post-translational modification Phosphoserine.

This sequence belongs to the SIN1 family. In terms of assembly, component of the mechanistic target of rapamycin complex 2 (mTORC2), consisting in two heterotretramers composed of MTOR, MLST8, RICTOR and MAPKAP1/SIN1. The mTORC2 core complex associates with PRR5/PROTOR1 and/or PRR5L/PROTOR2. Contrary to mTORC1, mTORC2 does not bind to and is not sensitive to FKBP12-rapamycin. Interacts with MAP3K2. Interacts with ATF2. Interacts with MAPK8. Interacts with GTP-bound HRAS and KRAS; inhibiting their activity. Interacts with IFNAR2. Phosphorylation at Ser-128 by PKC promotes relocalization to the perinuclear region, where the mTORC2 complex specifically mediates phosphorylation of SGK1. Phosphorylated at Thr-86 by AKT1 or RPS6KB1 in the presence of growth factors; the effect of this phosphorylation is however unclear. According to two studies, phosphorylation at Thr-86 by AKT1 is part of a positive feedback loop that increases mTORC2 activation. According to another study, phosphorylation at Thr-86 and Thr-398 by RPS6KB1 promotes dissociation from the mTORC2 complex, leading to inhibit mTORC2 signaling. In terms of tissue distribution, present in the lumenal epithelium and glandular epithelium of endometrium (at protein level).

Its subcellular location is the cell membrane. The protein localises to the cytoplasmic vesicle. The protein resides in the endoplasmic reticulum membrane. It localises to the early endosome membrane. It is found in the late endosome membrane. Its subcellular location is the lysosome membrane. The protein localises to the golgi apparatus membrane. The protein resides in the mitochondrion outer membrane. It localises to the cytoplasm. It is found in the perinuclear region. Its subcellular location is the nucleus. With respect to regulation, phosphatidylinositol 3,4,5-trisphosphate (PI(3,4,5)P3) promotes MTOR activation by relieving MAPKAP1/SIN1-mediated inhibition of MTOR that takes place in absence of PI(3,4,5)P3. Component of the mechanistic target of rapamycin complex 2 (mTORC2), which transduces signals from growth factors to pathways involved in proliferation, cytoskeletal organization, lipogenesis and anabolic output. In response to growth factors, mTORC2 phosphorylates and activates AGC protein kinase family members, including AKT (AKT1, AKT2 and AKT3), PKC (PRKCA, PRKCB and PRKCE) and SGK1. In contrast to mTORC1, mTORC2 is nutrient-insensitive. Within the mTORC2 complex, MAPKAP1/SIN1 acts as a substrate adapter which recognizes and binds AGC protein kinase family members for phosphorylation by MTOR. mTORC2 plays a critical role in AKT1 activation by mediating phosphorylation of different sites depending on the context, such as 'Thr-450', 'Ser-473', 'Ser-477' or 'Thr-479', facilitating the phosphorylation of the activation loop of AKT1 on 'Thr-308' by PDPK1/PDK1 which is a prerequisite for full activation. mTORC2 catalyzes the phosphorylation of SGK1 at 'Ser-422' and of PRKCA on 'Ser-657'. The mTORC2 complex also phosphorylates various proteins involved in insulin signaling, such as FBXW8 and IGF2BP1. mTORC2 acts upstream of Rho GTPases to regulate the actin cytoskeleton, probably by activating one or more Rho-type guanine nucleotide exchange factors. mTORC2 promotes the serum-induced formation of stress-fibers or F-actin. MAPKAP1 inhibits MAP3K2 by preventing its dimerization and autophosphorylation. Inhibits HRAS and KRAS independently of mTORC2 complex. Enhances osmotic stress-induced phosphorylation of ATF2 and ATF2-mediated transcription. Involved in ciliogenesis, regulates cilia length through its interaction with CCDC28B independently of mTORC2 complex. This Ovis aries (Sheep) protein is Target of rapamycin complex 2 subunit MAPKAP1 (MAPKAP1).